A 344-amino-acid chain; its full sequence is MRILEFDEKRQAAKLHIESEDDLWILHLILEKGDKVVAKTTRDIGLGKESRRIPMTIVLKVDYTEFQEFTNRLRIHGIIEDAPERFGIRGAHHTINLDIGDEIIIIKQQWSKYALDKLKKQADKRSKIIIALVDFDEYLIAIPFEQGIKILSEKSLRSLNEEEGIIEQNALEVATELAEYVKQYNPDAILLAGPGFFKEEVAKKVNNILKNKKVYIDSVSSATRAGLHEILKRDIIDKIMSDYEIAIGAKKMEKAMELLAKQPELVTYGLEQVKNAVEMGAVETVLLIEDLLSSNNQERLAIERILGDIENKRGEIILVPKESPIYFELKNLTGILAILRFRIN.

The protein belongs to the eukaryotic release factor 1 family. Pelota subfamily. Monomer. The cofactor is a divalent metal cation.

It is found in the cytoplasm. Functionally, may function in recognizing stalled ribosomes, interact with stem-loop structures in stalled mRNA molecules, and effect endonucleolytic cleavage of the mRNA. May play a role in the release non-functional ribosomes and degradation of damaged mRNAs. Has endoribonuclease activity. The sequence is that of Protein pelota homolog from Saccharolobus islandicus (strain M.16.27) (Sulfolobus islandicus).